The chain runs to 371 residues: Bifunctional enzyme IspD/IspF (371 aa).

Positions 1–212 (MLDISLIMLG…CLIPPSNEHF (212 aa)) are 2-C-methyl-D-erythritol 4-phosphate cytidylyltransferase. The interval 212 to 371 (FTGIGFDAHE…ANLKYYDWTK (160 aa)) is 2-C-methyl-D-erythritol 2,4-cyclodiphosphate synthase. A divalent metal cation is bound by residues D218 and H220. Residues 218–220 (DAH) and 244–245 (HS) contribute to the 4-CDP-2-C-methyl-D-erythritol 2-phosphate site. H252 is an a divalent metal cation binding site. Residues 266–268 (DIG), 271–275 (FPDTD), 342–345 (TTTE), F349, and R352 each bind 4-CDP-2-C-methyl-D-erythritol 2-phosphate.

In the N-terminal section; belongs to the IspD/TarI cytidylyltransferase family. IspD subfamily. It in the C-terminal section; belongs to the IspF family. A divalent metal cation is required as a cofactor.

The enzyme catalyses 2-C-methyl-D-erythritol 4-phosphate + CTP + H(+) = 4-CDP-2-C-methyl-D-erythritol + diphosphate. It catalyses the reaction 4-CDP-2-C-methyl-D-erythritol 2-phosphate = 2-C-methyl-D-erythritol 2,4-cyclic diphosphate + CMP. It functions in the pathway isoprenoid biosynthesis; isopentenyl diphosphate biosynthesis via DXP pathway; isopentenyl diphosphate from 1-deoxy-D-xylulose 5-phosphate: step 2/6. Its pathway is isoprenoid biosynthesis; isopentenyl diphosphate biosynthesis via DXP pathway; isopentenyl diphosphate from 1-deoxy-D-xylulose 5-phosphate: step 4/6. Its function is as follows. Bifunctional enzyme that catalyzes the formation of 4-diphosphocytidyl-2-C-methyl-D-erythritol from CTP and 2-C-methyl-D-erythritol 4-phosphate (MEP) (IspD), and catalyzes the conversion of 4-diphosphocytidyl-2-C-methyl-D-erythritol 2-phosphate (CDP-ME2P) to 2-C-methyl-D-erythritol 2,4-cyclodiphosphate (ME-CPP) with a corresponding release of cytidine 5-monophosphate (CMP) (IspF). The sequence is that of Bifunctional enzyme IspD/IspF from Campylobacter curvus (strain 525.92).